Consider the following 639-residue polypeptide: Collagen alpha-1(XII) chain (639 aa).

Positions 1 to 114 (CRKSLLQAVA…DSLSKIVDDL (114 aa)) constitute a VWFA domain. 6 Fibronectin type-III domains span residues 130-219 (APSN…LPVP), 220-310 (IVSL…LPLP), 311-401 (RPQD…VPAP), 402-490 (TNLR…SPKS), 491-585 (GPRN…TVRN), and 586-639 (LRVY…LRNL). Positions 473–496 (DESESDDLTGSERTSPKSGPRNLQ) are disordered.

This sequence belongs to the fibril-associated collagens with interrupted helices (FACIT) family. As to quaternary structure, trimer of identical chains each containing 190 kDa of non-triple-helical sequences. Post-translationally, the triple-helical tail is stabilized by disulfide bonds at each end. In terms of processing, prolines at the third position of the tripeptide repeating unit (G-X-Y) are hydroxylated in some or all of the chains. O-glycosylated; glycosaminoglycan of chondroitin-sulfate type.

The protein resides in the secreted. It localises to the extracellular space. It is found in the extracellular matrix. Its function is as follows. Type XII collagen interacts with type I collagen-containing fibrils, the COL1 domain could be associated with the surface of the fibrils, and the COL2 and NC3 domains may be localized in the perifibrillar matrix. This Oryctolagus cuniculus (Rabbit) protein is Collagen alpha-1(XII) chain (COL12A1).